A 428-amino-acid chain; its full sequence is C4-dicarboxylate transport protein (428 aa).

Transmembrane regions (helical) follow at residues serine 4 to glycine 24, leucine 44 to methionine 64, valine 76 to valine 96, isoleucine 142 to phenylalanine 162, valine 184 to methionine 204, leucine 222 to alanine 242, valine 289 to leucine 309, isoleucine 326 to valine 346, and isoleucine 352 to isoleucine 372.

It belongs to the dicarboxylate/amino acid:cation symporter (DAACS) (TC 2.A.23) family.

The protein resides in the cell inner membrane. Functionally, responsible for the transport of dicarboxylates such as succinate, fumarate, and malate from the periplasm across the membrane. The protein is C4-dicarboxylate transport protein of Salmonella arizonae (strain ATCC BAA-731 / CDC346-86 / RSK2980).